A 241-amino-acid polypeptide reads, in one-letter code: ATP synthase subunit a (241 aa).

The next 5 membrane-spanning stretches (helical) occupy residues 30-50, 89-109, 128-148, 193-213, and 214-234; these read GQVF…VLVG, LPFI…GALI, INTT…AGLS, LAVG…VMLL, and GLFT…FYIG.

This sequence belongs to the ATPase A chain family. In terms of assembly, F-type ATPases have 2 components, CF(1) - the catalytic core - and CF(0) - the membrane proton channel. CF(1) has five subunits: alpha(3), beta(3), gamma(1), delta(1), epsilon(1). CF(0) has four main subunits: a, b, b' and c.

It localises to the cellular thylakoid membrane. Functionally, key component of the proton channel; it plays a direct role in the translocation of protons across the membrane. This Synechococcus sp. (strain CC9902) protein is ATP synthase subunit a.